The following is a 90-amino-acid chain: U7-theraphotoxin-Hhn1a 3 (90 aa).

The first 26 residues, 1–26, serve as a signal peptide directing secretion; the sequence is MKTAIFTVVLALAVFAVLSFGWEANG. Residues 27-50 constitute a propeptide that is removed on maturation; the sequence is KALSEEFTELIHEKEAASETEARE. 3 disulfides stabilise this stretch: Cys51/Cys65, Cys58/Cys70, and Cys64/Cys81.

This sequence belongs to the neurotoxin 10 (Hwtx-1) family. 13 (Hntx-13) subfamily. In terms of tissue distribution, expressed by the venom gland.

It localises to the secreted. Its function is as follows. Ion channel inhibitor. The polypeptide is U7-theraphotoxin-Hhn1a 3 (Cyriopagopus hainanus (Chinese bird spider)).